A 337-amino-acid chain; its full sequence is MSKKKETDSYLSSDIKKSKDFKIISNLLKINDAVIVSHYYTTPDIQAITEATGGKVADSLEMAKFGKNHKAKTLLVAGVRFMGETAKILNPEKIVLMPTLKAECSLDLSCPEKEFNKFCDNHPDRTIVVYANTSAAIKARAHWIVTSSIAIDLIDYLDRLGEKIIWAPDKHLGRYIQKQTGADILIWNGTCIVHDEFKSQSLLNMKKIYPKSAILAHPESPENVLNLADFIGSTSQLIQAAKSINQKTIIIATDKGIFFKMQQACPDKILIEAPTSGEGLTCLSCARCPWMKMNNINRIIKSLTNKKKHNEINIPHDLQKKALKPLMRMLKFSQKVI.

Iminosuccinate is bound by residues His-38 and Ser-59. Cys-104 contributes to the [4Fe-4S] cluster binding site. Residues 130-132 (YAN) and Ser-147 each bind iminosuccinate. Cys-191 provides a ligand contact to [4Fe-4S] cluster. Residues 217 to 219 (HPE) and Thr-234 each bind iminosuccinate. Cys-288 serves as a coordination point for [4Fe-4S] cluster.

Belongs to the quinolinate synthase family. Type 1 subfamily. [4Fe-4S] cluster is required as a cofactor.

It is found in the cytoplasm. It carries out the reaction iminosuccinate + dihydroxyacetone phosphate = quinolinate + phosphate + 2 H2O + H(+). It functions in the pathway cofactor biosynthesis; NAD(+) biosynthesis; quinolinate from iminoaspartate: step 1/1. Catalyzes the condensation of iminoaspartate with dihydroxyacetone phosphate to form quinolinate. The sequence is that of Quinolinate synthase from Wigglesworthia glossinidia brevipalpis.